The chain runs to 485 residues: Rhamnulokinase (485 aa).

10 to 14 (ASSGR) contributes to the ATP binding site. Substrate-binding positions include Ala-78 and 233–235 (HDT). The active-site Proton acceptor is the Asp-234. Position 256 (Thr-256) interacts with ATP. Asn-293 lines the substrate pocket. Gln-301 provides a ligand contact to ATP. Cys-351 and Cys-368 are joined by a disulfide. ATP is bound at residue Gly-400.

It belongs to the rhamnulokinase family. Mg(2+) is required as a cofactor.

The enzyme catalyses L-rhamnulose + ATP = L-rhamnulose 1-phosphate + ADP + H(+). The protein operates within carbohydrate degradation; L-rhamnose degradation; glycerone phosphate from L-rhamnose: step 2/3. Involved in the catabolism of L-rhamnose (6-deoxy-L-mannose). Catalyzes the transfer of the gamma-phosphate group from ATP to the 1-hydroxyl group of L-rhamnulose to yield L-rhamnulose 1-phosphate. The protein is Rhamnulokinase of Bacillus subtilis (strain 168).